The following is a 361-amino-acid chain: Holliday junction branch migration complex subunit RuvB (361 aa).

Basic and acidic residues-rich tracts occupy residues 1 to 13 (MSDV…KLPE) and 33 to 43 (QGEHDIERSLR). The tract at residues 1-43 (MSDVERTEFKLPEGMDLSSPPQRNQDVDAAEQQGEHDIERSLR) is disordered. The segment at 2 to 203 (SDVERTEFKL…FGFTAQMEYY (202 aa)) is large ATPase domain (RuvB-L). Residues L42, R43, G84, K87, T88, T89, 150–152 (EDF), R193, Y203, and R240 each bind ATP. Mg(2+) is bound at residue T88. The tract at residues 204-274 (DTEDLTRVIS…AAQAALRVFD (71 aa)) is small ATPAse domain (RuvB-S). Residues 277–361 (ERGLDRLDRA…PEGAIGGTLF (85 aa)) form a head domain (RuvB-H) region. DNA contacts are provided by R332 and R337.

The protein belongs to the RuvB family. As to quaternary structure, homohexamer. Forms an RuvA(8)-RuvB(12)-Holliday junction (HJ) complex. HJ DNA is sandwiched between 2 RuvA tetramers; dsDNA enters through RuvA and exits via RuvB. An RuvB hexamer assembles on each DNA strand where it exits the tetramer. Each RuvB hexamer is contacted by two RuvA subunits (via domain III) on 2 adjacent RuvB subunits; this complex drives branch migration. In the full resolvosome a probable DNA-RuvA(4)-RuvB(12)-RuvC(2) complex forms which resolves the HJ.

The protein localises to the cytoplasm. The enzyme catalyses ATP + H2O = ADP + phosphate + H(+). The RuvA-RuvB-RuvC complex processes Holliday junction (HJ) DNA during genetic recombination and DNA repair, while the RuvA-RuvB complex plays an important role in the rescue of blocked DNA replication forks via replication fork reversal (RFR). RuvA specifically binds to HJ cruciform DNA, conferring on it an open structure. The RuvB hexamer acts as an ATP-dependent pump, pulling dsDNA into and through the RuvAB complex. RuvB forms 2 homohexamers on either side of HJ DNA bound by 1 or 2 RuvA tetramers; 4 subunits per hexamer contact DNA at a time. Coordinated motions by a converter formed by DNA-disengaged RuvB subunits stimulates ATP hydrolysis and nucleotide exchange. Immobilization of the converter enables RuvB to convert the ATP-contained energy into a lever motion, pulling 2 nucleotides of DNA out of the RuvA tetramer per ATP hydrolyzed, thus driving DNA branch migration. The RuvB motors rotate together with the DNA substrate, which together with the progressing nucleotide cycle form the mechanistic basis for DNA recombination by continuous HJ branch migration. Branch migration allows RuvC to scan DNA until it finds its consensus sequence, where it cleaves and resolves cruciform DNA. The protein is Holliday junction branch migration complex subunit RuvB of Corynebacterium aurimucosum (strain ATCC 700975 / DSM 44827 / CIP 107346 / CN-1) (Corynebacterium nigricans).